The sequence spans 346 residues: Protein farnesyltransferase/geranylgeranyltransferase type-1 subunit alpha (346 aa).

5 PFTA repeats span residues 59 to 93 (RSTR…ALGV), 94 to 128 (DLRE…KLGA), 130 to 164 (AVTN…ALGG), 165 to 198 (WEDE…RSPL), and 205 to 239 (MREL…NDTQ).

This sequence belongs to the protein prenyltransferase subunit alpha family. In terms of assembly, heterodimer of an alpha and a beta subunit. Mg(2+) is required as a cofactor.

It catalyses the reaction L-cysteinyl-[protein] + (2E,6E)-farnesyl diphosphate = S-(2E,6E)-farnesyl-L-cysteinyl-[protein] + diphosphate. It carries out the reaction geranylgeranyl diphosphate + L-cysteinyl-[protein] = S-geranylgeranyl-L-cysteinyl-[protein] + diphosphate. Its function is as follows. Essential subunit of both the farnesyltransferase and the geranylgeranyltransferase complex. Contributes to the transfer of a farnesyl or geranylgeranyl moiety from farnesyl or geranylgeranyl diphosphate to a cysteine at the fourth position from the C-terminus of several proteins having the C-terminal sequence Cys-aliphatic-aliphatic-X. The protein is Protein farnesyltransferase/geranylgeranyltransferase type-1 subunit alpha (FTA) of Solanum lycopersicum (Tomato).